We begin with the raw amino-acid sequence, 98 residues long: Integration host factor subunit alpha (98 aa).

Residues Phe-49–Ile-71 are disordered.

It belongs to the bacterial histone-like protein family. As to quaternary structure, heterodimer of an alpha and a beta chain.

Its function is as follows. This protein is one of the two subunits of integration host factor, a specific DNA-binding protein that functions in genetic recombination as well as in transcriptional and translational control. The polypeptide is Integration host factor subunit alpha (Pectobacterium atrosepticum (strain SCRI 1043 / ATCC BAA-672) (Erwinia carotovora subsp. atroseptica)).